The chain runs to 509 residues: Maturase K (509 aa).

This sequence belongs to the intron maturase 2 family. MatK subfamily.

The protein localises to the plastid. It is found in the chloroplast. Usually encoded in the trnK tRNA gene intron. Probably assists in splicing its own and other chloroplast group II introns. The polypeptide is Maturase K (Vachellia farnesiana (Sweet acacia)).